A 501-amino-acid chain; its full sequence is Cytochrome P450 monooxygenase notH (501 aa).

Residues 11-31 traverse the membrane as a helical segment; sequence LGLESVGWVLGLLTTSILYLF. N298 carries N-linked (GlcNAc...) asparagine glycosylation. C442 serves as a coordination point for heme.

This sequence belongs to the cytochrome P450 family. Requires heme as cofactor.

It localises to the membrane. The protein operates within alkaloid biosynthesis. Cytochrome P450 monooxygenase; part of the gene cluster that mediates the biosynthesis of notoamide, a fungal indole alkaloid that belongs to a family of natural products containing a characteristic bicyclo[2.2.2]diazaoctane core. The first step of notoamide biosynthesis involves coupling of L-proline and L-tryptophan by the bimodular NRPS notE, to produce cyclo-L-tryptophan-L-proline called brevianamide F. The reverse prenyltransferase notF then acts as a deoxybrevianamide E synthase and converts brevianamide F to deoxybrevianamide E via reverse prenylation at C-2 of the indole ring leading to the bicyclo[2.2.2]diazaoctane core. Deoxybrevianamide E is further hydroxylated at C-6 of the indole ring, likely catalyzed by the cytochrome P450 monooxygenase notG, to yield 6-hydroxy-deoxybrevianamide E. 6-hydroxy-deoxybrevianamide E is a specific substrate of the prenyltransferase notC for normal prenylation at C-7 to produce 6-hydroxy-7-prenyl-deoxybrevianamide, also called notoamide S. As the proposed pivotal branching point in notoamide biosynthesis, notoamide S can be diverted to notoamide E through an oxidative pyran ring closure putatively catalyzed by either notH cytochrome P450 monooxygenase or the notD FAD-linked oxidoreductase. This step would be followed by an indole 2,3-epoxidation-initiated pinacol-like rearrangement catalyzed by the notB FAD-dependent monooxygenase leading to the formation of notoamide C and notoamide D. On the other hand notoamide S is converted to notoamide T by notH (or notD), a bifunctional oxidase that also functions as the intramolecular Diels-Alderase responsible for generation of (+)-notoamide T. To generate antipodal (-)-notoaminide T, notH' (or notD') in Aspergillus versicolor is expected to catalyze a Diels-Alder reaction leading to the opposite stereochemistry. The remaining oxidoreductase notD (or notH) likely catalyzes the oxidative pyran ring formation to yield (+)-stephacidin A. The FAD-dependent monooxygenase notI is highly similar to notB and is predicted to catalyze a similar conversion from (+)-stephacidin A to (-)-notoamide B via the 2,3-epoxidation of (+)-stephacidin A followed by a pinacol-type rearrangement. Finally, it remains unclear which enzyme could be responsible for the final hydroxylation steps leading to notoamide A and sclerotiamide. The polypeptide is Cytochrome P450 monooxygenase notH (Aspergillus sp. (strain MF297-2)).